A 278-amino-acid chain; its full sequence is Phage-like element PBSX protein XkdB (278 aa).

Residues 58–80 (LKAREMAAVFGVSEKTVRRWLEL) constitute a DNA-binding region (H-T-H motif). Disordered regions lie at residues 117–136 (SLKE…RTDI) and 239–278 (QHER…RKQV). Over residues 248–263 (KTNNRTDFGRAEKRET) the composition is skewed to basic and acidic residues.

This sequence to B.subtilis YqaL.

This Bacillus subtilis (strain 168) protein is Phage-like element PBSX protein XkdB (xkdB).